The chain runs to 423 residues: Flotillin-1 (423 aa).

Belongs to the band 7/mec-2 family. Flotillin subfamily. Heterooligomeric complex of flotillin-1 and flotillin-2 and caveolin-1 and caveolin-2. In terms of tissue distribution, normally expressed in growing retinal exons of newly differentiated ganglion cells at the retinal margin. After optic nerve injury, expressed in all retinal ganglion cells and retinal axons. Also expressed in endothelial cells, spinal cord, larval and adult skin, muscle processes, thymus and gill macrophages.

The protein localises to the cell membrane. Its subcellular location is the endosome. It is found in the membrane. It localises to the caveola. The protein resides in the melanosome. The protein localises to the membrane raft. In terms of biological role, may act as a scaffolding protein within caveolar membranes, functionally participating in formation of caveolae or caveolae-like vesicles. This is Flotillin-1 (flot1) from Carassius auratus (Goldfish).